Here is a 207-residue protein sequence, read N- to C-terminus: Large ribosomal subunit protein uL4 (207 aa).

The tract at residues alanine 58–isoleucine 78 is disordered. The span at lysine 63–serine 77 shows a compositional bias: basic residues.

The protein belongs to the universal ribosomal protein uL4 family. In terms of assembly, part of the 50S ribosomal subunit.

One of the primary rRNA binding proteins, this protein initially binds near the 5'-end of the 23S rRNA. It is important during the early stages of 50S assembly. It makes multiple contacts with different domains of the 23S rRNA in the assembled 50S subunit and ribosome. Its function is as follows. Forms part of the polypeptide exit tunnel. In Aster yellows witches'-broom phytoplasma (strain AYWB), this protein is Large ribosomal subunit protein uL4.